We begin with the raw amino-acid sequence, 336 residues long: MKDRYILAFETSCDETSVAVLKNDDELLSNVIASQIESHKRFGGVVPEVASRHHVEVITACIEEALAEAGITEEDVTAVAVTYGPGLVGALLVGLSAAKAFAWAHGLPLIPVNHMAGHLMAAQSVEPLEFPLLALLVSGGHTELVYVSEAGDYKIVGETRDDAVGEAYDKVGRVMGLTYPAGREIDELAHQGQDIYDFPRAMIKEDNLEFSFSGLKSAFINLHHNAEQKGESLSTEDLCASFQAAVMDILMAKTKKALEKYPVKILVVAGGVAANKGLRERLAAEITDVKVIIPPLRLCGDNAGMIAYASVSEWNKENFAGWDLNAKPSLAFDTME.

Residues H114 and H118 each contribute to the Fe cation site. Substrate-binding positions include 136 to 140 (LVSGG), D169, G182, D186, and N275. D301 is a binding site for Fe cation.

The protein belongs to the KAE1 / TsaD family. Requires Fe(2+) as cofactor.

The protein localises to the cytoplasm. It catalyses the reaction L-threonylcarbamoyladenylate + adenosine(37) in tRNA = N(6)-L-threonylcarbamoyladenosine(37) in tRNA + AMP + H(+). Its function is as follows. Required for the formation of a threonylcarbamoyl group on adenosine at position 37 (t(6)A37) in tRNAs that read codons beginning with adenine. Is involved in the transfer of the threonylcarbamoyl moiety of threonylcarbamoyl-AMP (TC-AMP) to the N6 group of A37, together with TsaE and TsaB. TsaD likely plays a direct catalytic role in this reaction. The chain is tRNA N6-adenosine threonylcarbamoyltransferase from Streptococcus pneumoniae serotype 4 (strain ATCC BAA-334 / TIGR4).